The chain runs to 65 residues: Large ribosomal subunit protein bL35 (65 aa).

The protein belongs to the bacterial ribosomal protein bL35 family.

The polypeptide is Large ribosomal subunit protein bL35 (Photorhabdus laumondii subsp. laumondii (strain DSM 15139 / CIP 105565 / TT01) (Photorhabdus luminescens subsp. laumondii)).